The sequence spans 283 residues: NADPH-dependent 7-cyano-7-deazaguanine reductase (283 aa).

89–91 (IES) is a binding site for substrate. Residue 91 to 92 (SK) participates in NADPH binding. The active-site Thioimide intermediate is the cysteine 190. The active-site Proton donor is aspartate 197. Residue 229 to 230 (HE) coordinates substrate. 258–259 (RG) contacts NADPH.

Belongs to the GTP cyclohydrolase I family. QueF type 2 subfamily. In terms of assembly, homodimer.

Its subcellular location is the cytoplasm. The enzyme catalyses 7-aminomethyl-7-carbaguanine + 2 NADP(+) = 7-cyano-7-deazaguanine + 2 NADPH + 3 H(+). It functions in the pathway tRNA modification; tRNA-queuosine biosynthesis. Its function is as follows. Catalyzes the NADPH-dependent reduction of 7-cyano-7-deazaguanine (preQ0) to 7-aminomethyl-7-deazaguanine (preQ1). The protein is NADPH-dependent 7-cyano-7-deazaguanine reductase of Aromatoleum aromaticum (strain DSM 19018 / LMG 30748 / EbN1) (Azoarcus sp. (strain EbN1)).